A 343-amino-acid polypeptide reads, in one-letter code: Dihydroorotate dehydrogenase (quinone) (343 aa).

Residues 61–65 and Thr85 contribute to the FMN site; that span reads AGLDK. Lys65 contacts substrate. 110 to 114 lines the substrate pocket; it reads NRMGF. FMN is bound by residues Asn138 and Asn171. Residue Asn171 participates in substrate binding. Ser174 (nucleophile) is an active-site residue. Residue Asn176 coordinates substrate. FMN contacts are provided by Lys216 and Thr244. 245–246 lines the substrate pocket; that stretch reads NT. FMN is bound by residues Gly267, Gly296, and 317-318; that span reads YS.

The protein belongs to the dihydroorotate dehydrogenase family. Type 2 subfamily. In terms of assembly, monomer. The cofactor is FMN.

It is found in the cell membrane. The catalysed reaction is (S)-dihydroorotate + a quinone = orotate + a quinol. It participates in pyrimidine metabolism; UMP biosynthesis via de novo pathway; orotate from (S)-dihydroorotate (quinone route): step 1/1. Functionally, catalyzes the conversion of dihydroorotate to orotate with quinone as electron acceptor. The protein is Dihydroorotate dehydrogenase (quinone) of Pseudomonas syringae pv. tomato (strain ATCC BAA-871 / DC3000).